Here is a 657-residue protein sequence, read N- to C-terminus: Iron-sulfur cluster biogenesis chaperone, mitochondrial (657 aa).

It belongs to the heat shock protein 70 family. As to quaternary structure, interacts with the Fe/S cluster assembly proteins ISU1, MGE1, GRX5 and JAC1.

It is found in the mitochondrion matrix. It catalyses the reaction ATP + H2O = ADP + phosphate + H(+). Its function is as follows. Required for the assembly of iron-sulfur (Fe/S) clusters in mitochondria. Assisted by the DnaJ-like co-chaperone JAC1 and the nucleotide exchange factor MGE1, it mediates ATP-dependent Fe-S cluster transfer from the scaffold proteins ISU1/ISU2 to GRX5. This chain is Iron-sulfur cluster biogenesis chaperone, mitochondrial, found in Saccharomyces cerevisiae (strain ATCC 204508 / S288c) (Baker's yeast).